Reading from the N-terminus, the 337-residue chain is Ketol-acid reductoisomerase (NAD(P)(+)) (337 aa).

The 186-residue stretch at 2–187 (ARMFYDADAN…GCTRAGVIET (186 aa)) folds into the KARI N-terminal Rossmann domain. NADP(+) contacts are provided by residues 25 to 28 (FGSQ), arginine 48, and 88 to 91 (DEVQ). The active site involves histidine 113. Glycine 139 contacts NADP(+). In terms of domain architecture, KARI C-terminal knotted spans 188 to 333 (SFQEETETDL…AELRGMMPWL (146 aa)). 4 residues coordinate Mg(2+): aspartate 196, glutamate 200, glutamate 232, and glutamate 236. Serine 257 is a binding site for substrate.

This sequence belongs to the ketol-acid reductoisomerase family. It depends on Mg(2+) as a cofactor.

The catalysed reaction is (2R)-2,3-dihydroxy-3-methylbutanoate + NAD(+) = (2S)-2-acetolactate + NADH + H(+). It catalyses the reaction (2R)-2,3-dihydroxy-3-methylbutanoate + NADP(+) = (2S)-2-acetolactate + NADPH + H(+). It functions in the pathway amino-acid biosynthesis; L-isoleucine biosynthesis; L-isoleucine from 2-oxobutanoate: step 2/4. Its pathway is amino-acid biosynthesis; L-valine biosynthesis; L-valine from pyruvate: step 2/4. Involved in the biosynthesis of branched-chain amino acids (BCAA). Catalyzes an alkyl-migration followed by a ketol-acid reduction of (S)-2-acetolactate (S2AL) to yield (R)-2,3-dihydroxy-isovalerate. In the isomerase reaction, S2AL is rearranged via a Mg-dependent methyl migration to produce 3-hydroxy-3-methyl-2-ketobutyrate (HMKB). In the reductase reaction, this 2-ketoacid undergoes a metal-dependent reduction by NADPH or NADH to yield (R)-2,3-dihydroxy-isovalerate. The sequence is that of Ketol-acid reductoisomerase (NAD(P)(+)) from Syntrophomonas wolfei subsp. wolfei (strain DSM 2245B / Goettingen).